Reading from the N-terminus, the 175-residue chain is Ribosome maturation factor RimM (175 aa).

Residues 96 to 172 form the PRC barrel domain; sequence PDTYYDHQLE…LIEIDPPDGL (77 aa).

This sequence belongs to the RimM family. Binds ribosomal protein uS19.

The protein localises to the cytoplasm. Functionally, an accessory protein needed during the final step in the assembly of 30S ribosomal subunit, possibly for assembly of the head region. Essential for efficient processing of 16S rRNA. May be needed both before and after RbfA during the maturation of 16S rRNA. It has affinity for free ribosomal 30S subunits but not for 70S ribosomes. The chain is Ribosome maturation factor RimM from Mycolicibacterium paratuberculosis (strain ATCC BAA-968 / K-10) (Mycobacterium paratuberculosis).